Here is a 377-residue protein sequence, read N- to C-terminus: Apelin receptor (377 aa).

The Extracellular portion of the chain corresponds to 1–28; that stretch reads MEDDGYNYYGADNQSECDYADWTPSGAL. N-linked (GlcNAc...) asparagine glycosylation occurs at N13. Intrachain disulfides connect C17–C279 and C100–C179. The chain crosses the membrane as a helical span at residues 29–52; it reads IPAIYILVFLLGTTGNGLVLWTVF. At 53–62 the chain is on the cytoplasmic side; sequence WSSREKRRSA. The helical transmembrane segment at 63 to 84 threads the bilayer; it reads DIFIASLAVADLTFVVTLPLWA. Over 85–97 the chain is Extracellular; the sequence is TYTYREFDWPFGT. A helical membrane pass occupies residues 98–123; that stretch reads FSCKLSSYLIFVNMYASVFCLTGLSF. Topologically, residues 124 to 144 are cytoplasmic; that stretch reads DRYLAIVRPVANARLRLRVSG. The helical transmembrane segment at 145–162 threads the bilayer; the sequence is AVATAVLWVLAALLAVPV. Over 163-196 the chain is Extracellular; that stretch reads MVFRSTDIPENSTKTQCYMDYSMVATSNSEWAWE. N173 is a glycosylation site (N-linked (GlcNAc...) asparagine). The helical transmembrane segment at 197-221 threads the bilayer; sequence VGLGVSSTAVGFVVPFIIMLTCYFF. Residues 222–244 are Cytoplasmic-facing; sequence IAQTIAGHFRKERIEGLRKRRRL. A helical transmembrane segment spans residues 245 to 268; sequence LSIIVVLVVTFALCWMPYHLVKTL. Residues 269–287 lie on the Extracellular side of the membrane; the sequence is YMLGNLLHWPCDFDSFLMN. The chain crosses the membrane as a helical span at residues 288–310; that stretch reads VFPYCTCISYVNSCLNPFLYAFF. At 311–377 the chain is on the cytoplasmic side; that stretch reads DPRFRRACTS…IPYSQETLVD (67 aa). Residues 335 to 349 show a composition bias toward low complexity; it reads SSSAEKSASYSSGHS. The interval 335–377 is disordered; sequence SSSAEKSASYSSGHSQGPGPNMCKGGEPMHEKSIPYSQETLVD.

It belongs to the G-protein coupled receptor 1 family. In terms of assembly, homodimer; dimerization inhibits APLNR-mediated G protein and beta-arrestin signaling pathways compared to monomeric APLNR. As to expression, widely expressed. Highest expression in the lung, lower in the heart, placenta, ovary, skeletal muscle, mammary gland, kidney and several structures in the brain as the hypothalamus (supraoptic and periventricular nuclei), pituitary, olfactory bulb and pineal gland.

The protein localises to the cell membrane. G protein-coupled receptor for peptide hormones apelin (APLN) and apelin receptor early endogenous ligand (APELA/ELA), that plays a role in the regulation of normal cardiovascular function and fluid homeostasis. When acting as apelin receptor, activates both G(i) protein pathway that inhibits adenylate cyclase activity, and the beta-arrestin pathway that promotes internalization of the receptor. APLNR/APJ also functions as mechanoreceptor that is activated by pathological stimuli in a G-protein-independent fashion to induce beta-arrestin signaling, hence eliciting cardiac hypertrophy. However, the presence of apelin ligand blunts cardiac hypertrophic induction from APLNR/APJ on response to pathological stimuli. Plays a key role in early development such as gastrulation, blood vessels formation and heart morphogenesis by acting as a APELA receptor. May promote angioblast migration toward the embryonic midline, i.e. the position of the future vessel formation, during vasculogenesis. Promotes sinus venosus (SV)-derived endothelial cells migration into the developing heart to promote coronary blood vessel development. Also plays a role in various processes in adults such as regulation of blood vessel formation, blood pressure, heart contractility and heart failure. This Rattus norvegicus (Rat) protein is Apelin receptor.